A 1425-amino-acid chain; its full sequence is MGDWHRAFTQNTLVPPHPQRARQLGKESTAFQCILKWLDGPLIKQGILDMLSELECHLRVTLFDVTYKHFFGRTWKTTVKPTNQPSKQPPRITFNEPLYFHTTLSHPSIVAVVEVVTEGRKRDGTLQLLSCGFGILRIFGNKPESPTSAAQDKRLRLYHGTPRALLHPLLQDPIEQNKFMRLMENCSLQYTLKPHPPLEPAFHLLPENLLVSGFQQIPGLLPPHGDTGDALRKPRFQKPTTWHLDDLFFTLYPSLEKFEEELVQLLISDREGVGLLDSGTLEVLERRLHVCVHNGLGFVQRPQVVVLVPEMDVALTRSASFSRKISASSKNSSGNQALVLRSHLRLPEMVSHPAFAIVFQLEYVFNSPSGADGGASSPTSISSVACMHMVRWAVWNPDLEVGPGKVTLPLQGGVQQNPSRCLVYKVPSASMSSEEVKQVESGTIQFQFSLSSDGPTEHANGPRVGRRSSRKMPASPSGTPAPAARDLAATQDSPVGPGLSLSQLTASPLSPALQSSSKPPLQPPDSSQSPEGPQLQAESVLESRVSHLEADLSQPASLQGTPAVEHLQELPFTPLHAPIVVGAQTRSSRSQLSRAAMVLLQSSGFPEILDASQQPVEAVNPIDPVRFNPQKEESDCLRGNEIVLQFLAFSRAAQDCPGTPWPQTVYFTFQFYRFPPETTPRLQLVKLDGTGKSGSGSLSHILVPINKDGSFDAGSPGLQLRYMVDPGFLKPGEQRWFAHYLAAQTLQVDVWDGDSLLLIGSAGVQMKHLLRQGRPAVQVSHELEVVATEYEQEMMAVSGDVAGFGSVKPIGVHTVVKGRLHLTLANVGHACEPRARGSNLLPPSRSRVISNDGASFFSGGSLLIPGGPKRKRVVQAQRLADVDSELAAMLLTHTRAGQGPQAAGQEADAVHKRKLERMRLVRLQEAGGDSDSRRISLLAQHSVRAQHSRDLQVIDAYRERTKAESIAGVLSQAITTHHTLYATLGTAEFFEFALKNPHNTQHTVAIEIDSPELSIILDSQEWRYFKEATGLHTPLEEDMFHLRGSLAPQLYLRPRETAHIPLKFQSFSVGPLAPTQAPAEVITEKDAESGPLWKCSAMPTKHAKVLFRVETGQLIAVLCLTVEPQPHVVDQVFRFYHPELTFLKKAIRLPPWHTLPGAPVGMPGEDPPVHVRCSDPNVICEAQNVGPGEPRDVFLKVASGPSPEIKDFFVVIYADRWLAVPVQTWQVCLHSLQRVDVSCVAGQLTRLSLVLRGTQTVRKVRAFTSHPQELKTDPAGVFVLPPHGVQDLHVGVRPRRAGSRFVHLNLVDIDYHQLVASWLVCLSCRQPLISKAFEITMAAGDEKGTNKRITYTNPYPSRRTYRLHSDRPELLRFKEDSFQVAGGETYTIGLRFLPSGSAGQEEILIYINDHEDKNEETFCVKVLYQ.

Residue Ser-145 is modified to Phosphoserine. The tract at residues Phe-448–Gln-554 is disordered. Low complexity-rich tracts occupy residues Pro-473–Ala-484 and Ser-507–Pro-530. The segment at Leu-822–Gln-1425 is sufficient for basal bodies localization.

This sequence belongs to the NPHP4 family. As to quaternary structure, interacts with NPHP1 and RPGRIP1L/NPHP8; NPHP1, NPHP4 and RPGRIP1L are proposed to form a functional NPHP1-4-8 module localized to cell-cell contacts and the ciliary transition zone; NPHP4 mediates the interaction between NPHP1 and RPGRIP1L. Interacts with IQCB1/NPHP5; the interaction likely requires additional interactors. Interacts with RPGRIP1, CEP164, JADE1, PALS1, INADL, PARD6A, INVS, DVL2. Interacts with INTU; INTU mediates the interaction between NPHP4 and DAAM1. Interacts with JADE1. Interacts with SPATA7. As to expression, expressed in the retina (at protein level).

It is found in the cytoplasm. Its subcellular location is the cytoskeleton. The protein localises to the cilium basal body. It localises to the microtubule organizing center. The protein resides in the centrosome. It is found in the cell junction. Its subcellular location is the tight junction. Its function is as follows. Involved in the organization of apical junctions; the function is proposed to implicate a NPHP1-4-8 module. Does not seem to be strictly required for ciliogenesis. Required for building functional cilia. Involved in the organization of the subapical actin network in multiciliated epithelial cells. Seems to recruit INT to basal bodies of motile cilia which subsequently interacts with actin-modifying proteins such as DAAM1. In cooperation with INVS may down-regulate the canonical Wnt pathway and promote the Wnt-PCP pathway by regulating expression and subcellular location of disheveled proteins. Stabilizes protein levels of JADE1 and promotes its translocation to the nucleus leading to cooperative inhibition of canonical Wnt signaling. Acts as negative regulator of the hippo pathway by association with LATS1 and modifying LATS1-dependent phosphorylation and localization of WWTR1/TAZ. This chain is Nephrocystin-4 (Nphp4), found in Mus musculus (Mouse).